The following is a 132-amino-acid chain: U11/U12 small nuclear ribonucleoprotein 25 kDa protein (132 aa).

One can recognise a Ubiquitin-like domain in the interval 41–132; that stretch reads MTVRVCKMDG…VSFIKKLRQK (92 aa).

Component of the U11/U12 snRNPs that are part of the U12-type spliceosome.

Its subcellular location is the nucleus. This chain is U11/U12 small nuclear ribonucleoprotein 25 kDa protein (SNRNP25), found in Homo sapiens (Human).